Consider the following 262-residue polypeptide: Sepiapterin reductase (262 aa).

Methionine 1 is subject to N-acetylmethionine. NADP(+) is bound by residues 15–21 (GASRGFG) and 43–44 (RS). Phosphoserine is present on serine 46. 70-71 (DL) is a binding site for NADP(+). Substrate-binding positions include 158 to 159 (SL) and tyrosine 171. NADP(+) is bound at residue lysine 175. Residue serine 196 is modified to Phosphoserine. Glycine 200 is a binding site for substrate. Residue 202 to 207 (LDTDMQ) participates in NADP(+) binding. Serine 214 bears the Phosphoserine mark. Aspartate 258 provides a ligand contact to substrate.

Belongs to the sepiapterin reductase family. Homodimer.

The protein resides in the cytoplasm. It catalyses the reaction L-erythro-7,8-dihydrobiopterin + NADP(+) = L-sepiapterin + NADPH + H(+). It carries out the reaction (6R)-L-erythro-5,6,7,8-tetrahydrobiopterin + 2 NADP(+) = 6-pyruvoyl-5,6,7,8-tetrahydropterin + 2 NADPH + 2 H(+). The enzyme catalyses (S)-benzoin + NADP(+) = benzil + NADPH + H(+). Catalyzes the final one or two reductions in tetra-hydrobiopterin biosynthesis to form 5,6,7,8-tetrahydrobiopterin. The enzyme also catalyzes the reduction of benzil to (S)-benzoin. In Meriones unguiculatus (Mongolian jird), this protein is Sepiapterin reductase (SPR).